The following is a 197-amino-acid chain: RNA polymerase sigma GP34 factor (197 aa).

Functionally, sigma factors are initiation factors that promote the attachment of RNA polymerase to specific initiation sites and are then released. This chain is RNA polymerase sigma GP34 factor (34), found in Bacillus subtilis (Bacteriophage SP01).